The primary structure comprises 224 residues: MKLDLFVYNSQHFVNNITLYQLNHLNSTSFSFIFLSGLFTSLSPCIISILPVCILYIAGETQKLNPINKTKNLFLFCLGTISSFITLGILATLITKTYSQFFNGIPTISAVVIIYMGLNLLNIVHINSPKFNGLVTNNNYNFKMYLSGVGIGIAISSCSTPIFVTLLVWINSTQKIFTGLIFILIYSIGYIFPIIIGSIFSTSFLKLTESLSGIIMAPSVELCY.

The next 5 membrane-spanning stretches (helical) occupy residues 32–52, 74–94, 104–124, 150–170, and 176–196; these read FIFL…ILPV, FLFC…ATLI, GIPT…LNIV, GIGI…LVWI, and IFTG…PIII.

Belongs to the DsbD family.

Its subcellular location is the plastid. The protein resides in the chloroplast membrane. In terms of biological role, could be involved in cytochrome c synthesis. The protein is Putative cytochrome c-type biogenesis protein DbsD-like of Pyropia yezoensis (Susabi-nori).